Reading from the N-terminus, the 190-residue chain is Potassium-transporting ATPase KdpC subunit (190 aa).

Residues 13–33 (VGFLLLTLVCGVVYPGIVTII) form a helical membrane-spanning segment.

The protein belongs to the KdpC family. The system is composed of three essential subunits: KdpA, KdpB and KdpC.

Its subcellular location is the cell membrane. Functionally, part of the high-affinity ATP-driven potassium transport (or Kdp) system, which catalyzes the hydrolysis of ATP coupled with the electrogenic transport of potassium into the cytoplasm. This subunit acts as a catalytic chaperone that increases the ATP-binding affinity of the ATP-hydrolyzing subunit KdpB by the formation of a transient KdpB/KdpC/ATP ternary complex. In Listeria welshimeri serovar 6b (strain ATCC 35897 / DSM 20650 / CCUG 15529 / CIP 8149 / NCTC 11857 / SLCC 5334 / V8), this protein is Potassium-transporting ATPase KdpC subunit.